We begin with the raw amino-acid sequence, 267 residues long: N-acetylgalactosamine permease IIC component 1 (267 aa).

The Periplasmic segment spans residues 1–10 (MHEITLLQGL). In terms of domain architecture, PTS EIIC type-4 spans 1–237 (MHEITLLQGL…VAVLGAGFAV (237 aa)). The chain crosses the membrane as a helical span at residues 11-31 (SLAALVFVLGIDFWLEALFLF). At 32-33 (RP) the chain is on the cytoplasmic side. The helical transmembrane segment at 34–54 (IIVCTLTGAILGDIQTGLITG) threads the bilayer. Topologically, residues 55 to 66 (GLTELAFAGLTP) are periplasmic. Residues 67–87 (AGGVQPPNPIMAGLMTTVIAW) traverse the membrane as a helical segment. The Cytoplasmic segment spans residues 88-94 (STGVDAK). A helical membrane pass occupies residues 95–115 (TAIGLGLPFSLLMQYVILFFY). Residues 116 to 141 (SAFSLFMTKADKCAKEADTAAFSRLN) are Periplasmic-facing. Residues 142–162 (WTTMLIVASAYAVIAFLCTYL) traverse the membrane as a helical segment. Topologically, residues 163-177 (AQGAMQALVKAMPAW) are cytoplasmic. A helical transmembrane segment spans residues 178-198 (LTHGFEVAGGILPAVGFGLLL). Residues 199–209 (RVMFKAQYIPY) are Periplasmic-facing. The chain crosses the membrane as a helical span at residues 210–230 (LIAGFLFVCYIQVSNLLPVAV). The Cytoplasmic segment spans residues 231-267 (LGAGFAVYEFFNAKSRQQAQPQPVASKNEEEDYSNGI).

It is found in the cell inner membrane. Functionally, the phosphoenolpyruvate-dependent sugar phosphotransferase system (PTS), a major carbohydrate active -transport system, catalyzes the phosphorylation of incoming sugar substrates concomitant with their translocation across the cell membrane. This system is involved in N-acetylgalactosamine transport. The protein is N-acetylgalactosamine permease IIC component 1 (agaC) of Escherichia coli (strain K12).